We begin with the raw amino-acid sequence, 232 residues long: MLKLTDITWLYHYLPMRFSLTVERGEQVAILGPSGAGKSTLLNLIAGFLTPASGSLTIDGVDHTTTPPSRRPVSMLFQENNLFSHLTVAQNIGLGLNPGLKLNAAQQEKMHAIARQMGIDNLMARLPGELSGGQRQRVALARCLVREQPILLLDEPFSALDPALRQEMLTLVSTSCQQQKMTLLMVSHSVEDAARIATRSVVVADGRIAWQGKTEELLSGKASASAILGITG.

One can recognise an ABC transporter domain in the interval 2 to 230 (LKLTDITWLY…KASASAILGI (229 aa)). Position 32–39 (32–39 (GPSGAGKS)) interacts with ATP.

This sequence belongs to the ABC transporter superfamily. Thiamine importer (TC 3.A.1.19.1) family. The complex is composed of two ATP-binding proteins (ThiQ), two transmembrane proteins (ThiP) and a solute-binding protein (ThiB).

The protein localises to the cell inner membrane. The enzyme catalyses thiamine(out) + ATP + H2O = thiamine(in) + ADP + phosphate + H(+). Its function is as follows. Part of the ABC transporter complex ThiBPQ involved in thiamine import. Responsible for energy coupling to the transport system. This chain is Thiamine import ATP-binding protein ThiQ, found in Shigella flexneri serotype 5b (strain 8401).